Here is a 132-residue protein sequence, read N- to C-terminus: Fatty acid-binding protein 9 (132 aa).

4 positions are modified to phosphoserine: Ser-13, Ser-14, Ser-44, and Ser-91.

This sequence belongs to the calycin superfamily. Fatty-acid binding protein (FABP) family.

It localises to the cytoplasm. This chain is Fatty acid-binding protein 9 (FABP9), found in Homo sapiens (Human).